A 503-amino-acid chain; its full sequence is Aspartyl/glutamyl-tRNA(Asn/Gln) amidotransferase subunit B (503 aa).

This sequence belongs to the GatB/GatE family. GatB subfamily. As to quaternary structure, heterotrimer of A, B and C subunits.

It carries out the reaction L-glutamyl-tRNA(Gln) + L-glutamine + ATP + H2O = L-glutaminyl-tRNA(Gln) + L-glutamate + ADP + phosphate + H(+). It catalyses the reaction L-aspartyl-tRNA(Asn) + L-glutamine + ATP + H2O = L-asparaginyl-tRNA(Asn) + L-glutamate + ADP + phosphate + 2 H(+). Its function is as follows. Allows the formation of correctly charged Asn-tRNA(Asn) or Gln-tRNA(Gln) through the transamidation of misacylated Asp-tRNA(Asn) or Glu-tRNA(Gln) in organisms which lack either or both of asparaginyl-tRNA or glutaminyl-tRNA synthetases. The reaction takes place in the presence of glutamine and ATP through an activated phospho-Asp-tRNA(Asn) or phospho-Glu-tRNA(Gln). This Nocardia farcinica (strain IFM 10152) protein is Aspartyl/glutamyl-tRNA(Asn/Gln) amidotransferase subunit B.